The chain runs to 280 residues: Shikimate dehydrogenase (NADP(+)) (280 aa).

Residues 20-22 (SLS) and Thr67 contribute to the shikimate site. The Proton acceptor role is filled by Lys71. Glu83 lines the NADP(+) pocket. Shikimate contacts are provided by Asn92 and Asp107. NADP(+) contacts are provided by residues 131-135 (GAGGA), 155-160 (NRTLNK), and Leu224. Tyr226 contacts shikimate. Gly247 is an NADP(+) binding site.

Belongs to the shikimate dehydrogenase family. As to quaternary structure, homodimer.

It carries out the reaction shikimate + NADP(+) = 3-dehydroshikimate + NADPH + H(+). The protein operates within metabolic intermediate biosynthesis; chorismate biosynthesis; chorismate from D-erythrose 4-phosphate and phosphoenolpyruvate: step 4/7. In terms of biological role, involved in the biosynthesis of the chorismate, which leads to the biosynthesis of aromatic amino acids. Catalyzes the reversible NADPH linked reduction of 3-dehydroshikimate (DHSA) to yield shikimate (SA). The chain is Shikimate dehydrogenase (NADP(+)) from Caldanaerobacter subterraneus subsp. tengcongensis (strain DSM 15242 / JCM 11007 / NBRC 100824 / MB4) (Thermoanaerobacter tengcongensis).